Here is a 344-residue protein sequence, read N- to C-terminus: Ig alpha chain C region (344 aa).

One can recognise an Ig-like 1 domain in the interval 6 to 99 (PTIYPLTLPP…SNPVQELDVN (94 aa)). 2 disulfides stabilise this stretch: Cys-26-Cys-84 and Cys-76-Cys-100. N-linked (GlcNAc...) asparagine glycosylation is found at Asn-38 and Asn-99. Ser-101 carries O-linked (GalNAc) serine; in variant MOPC 47A glycosylation. Disulfide bonds link Cys-114–Cys-171 and Cys-138–Cys-195. Ig-like domains are found at residues 116-206 (PSLS…GTLT) and 219-321 (PQVH…KTID). Asn-329 is a glycosylation site (N-linked (GlcNAc...) asparagine). N-linked (GlcNAc...) asparagine; in variant M511 glycosylation occurs at Ser-331.

Functionally, ig alpha is the major immunoglobulin class in body secretions. It may serve both to defend against local infection and to prevent access of foreign antigens to the general immunologic system. The sequence is that of Ig alpha chain C region from Mus musculus (Mouse).